The primary structure comprises 774 residues: Probable ubiquitin-like-specific protease 2A (774 aa).

A disordered region spans residues 118–141 (SSLSENDEVSTGEATNPASDPHEV). Catalysis depends on residues H400, D430, and C485. Residues 548 to 568 (ILPANSKSEPPHCGVSNRNDQ) are disordered.

This sequence belongs to the peptidase C48 family.

Its function is as follows. Protease that catalyzes two essential functions in the SUMO pathway: processing of full-length SUMOs to their mature forms and deconjugation of SUMO from targeted proteins. In Arabidopsis thaliana (Mouse-ear cress), this protein is Probable ubiquitin-like-specific protease 2A (ULP2A).